The chain runs to 704 residues: Polyribonucleotide nucleotidyltransferase (704 aa).

Residues aspartate 491 and aspartate 497 each contribute to the Mg(2+) site. Residues 558–617 (PNYAVIEINSDKIRDVIGKGGATIRQLTEDTGAVIDIDDNGTIRIFGENKAATKEAIRQI) form the KH domain. The S1 motif domain occupies 627–695 (GKVYKGTVAR…NRGRIKLTMK (69 aa)).

Belongs to the polyribonucleotide nucleotidyltransferase family. Component of the RNA degradosome, which is a multiprotein complex involved in RNA processing and mRNA degradation. It depends on Mg(2+) as a cofactor.

It is found in the cytoplasm. It carries out the reaction RNA(n+1) + phosphate = RNA(n) + a ribonucleoside 5'-diphosphate. In terms of biological role, involved in mRNA degradation. Catalyzes the phosphorolysis of single-stranded polyribonucleotides processively in the 3'- to 5'-direction. This Psychrobacter sp. (strain PRwf-1) protein is Polyribonucleotide nucleotidyltransferase.